Here is a 403-residue protein sequence, read N- to C-terminus: Phosphopentomutase (403 aa).

The Mn(2+) site is built by Asp-13, Asp-298, His-303, Asp-339, His-340, and His-351.

The protein belongs to the phosphopentomutase family. Mn(2+) is required as a cofactor.

It localises to the cytoplasm. The enzyme catalyses 2-deoxy-alpha-D-ribose 1-phosphate = 2-deoxy-D-ribose 5-phosphate. It catalyses the reaction alpha-D-ribose 1-phosphate = D-ribose 5-phosphate. It functions in the pathway carbohydrate degradation; 2-deoxy-D-ribose 1-phosphate degradation; D-glyceraldehyde 3-phosphate and acetaldehyde from 2-deoxy-alpha-D-ribose 1-phosphate: step 1/2. Functionally, isomerase that catalyzes the conversion of deoxy-ribose 1-phosphate (dRib-1-P) and ribose 1-phosphate (Rib-1-P) to deoxy-ribose 5-phosphate (dRib-5-P) and ribose 5-phosphate (Rib-5-P), respectively. The sequence is that of Phosphopentomutase from Streptococcus pneumoniae serotype 19F (strain G54).